The sequence spans 267 residues: Undecaprenyl-diphosphatase (267 aa).

7 helical membrane-spanning segments follow: residues 39–59 (QGLA…ILYF), 87–107 (WMIA…KDFI), 111–131 (LRSA…LWWV), 149–169 (ALFI…RSGA), 189–209 (FLMS…KLVT), 218–238 (ALSI…HAFL), and 244–264 (VGMM…IAFL).

Belongs to the UppP family.

The protein resides in the cell inner membrane. The enzyme catalyses di-trans,octa-cis-undecaprenyl diphosphate + H2O = di-trans,octa-cis-undecaprenyl phosphate + phosphate + H(+). Functionally, catalyzes the dephosphorylation of undecaprenyl diphosphate (UPP). Confers resistance to bacitracin. The protein is Undecaprenyl-diphosphatase of Photobacterium profundum (strain SS9).